The primary structure comprises 328 residues: Cytochrome f (328 aa).

The N-terminal stretch at Met1–Ala44 is a signal peptide. Heme-binding residues include Tyr45, Cys66, Cys69, and His70. The chain crosses the membrane as a helical span at residues Phe296 to Leu313.

The protein belongs to the cytochrome f family. As to quaternary structure, the 4 large subunits of the cytochrome b6-f complex are cytochrome b6, subunit IV (17 kDa polypeptide, PetD), cytochrome f and the Rieske protein, while the 4 small subunits are PetG, PetL, PetM and PetN. The complex functions as a dimer. Requires heme as cofactor.

It localises to the cellular thylakoid membrane. Its function is as follows. Component of the cytochrome b6-f complex, which mediates electron transfer between photosystem II (PSII) and photosystem I (PSI), cyclic electron flow around PSI, and state transitions. The chain is Cytochrome f (petA) from Synechocystis sp. (strain ATCC 27184 / PCC 6803 / Kazusa).